The following is a 215-amino-acid chain: Elongation factor Ts (215 aa).

Residues 80 to 83 are involved in Mg(2+) ion dislocation from EF-Tu; it reads TDFA.

Belongs to the EF-Ts family.

The protein resides in the cytoplasm. Functionally, associates with the EF-Tu.GDP complex and induces the exchange of GDP to GTP. It remains bound to the aminoacyl-tRNA.EF-Tu.GTP complex up to the GTP hydrolysis stage on the ribosome. In Acetivibrio thermocellus (strain ATCC 27405 / DSM 1237 / JCM 9322 / NBRC 103400 / NCIMB 10682 / NRRL B-4536 / VPI 7372) (Clostridium thermocellum), this protein is Elongation factor Ts.